Here is a 270-residue protein sequence, read N- to C-terminus: Phosphoribosylformylglycinamidine synthase subunit PurQ (270 aa).

The Glutamine amidotransferase type-1 domain maps to 5 to 251 (ALVLHATGTN…VIRERDSEEE (247 aa)). The Nucleophile role is filled by C95. Catalysis depends on residues H236 and E238.

As to quaternary structure, part of the FGAM synthase complex composed of 1 PurL, 1 PurQ and 2 PurS subunits.

The protein localises to the cytoplasm. The enzyme catalyses N(2)-formyl-N(1)-(5-phospho-beta-D-ribosyl)glycinamide + L-glutamine + ATP + H2O = 2-formamido-N(1)-(5-O-phospho-beta-D-ribosyl)acetamidine + L-glutamate + ADP + phosphate + H(+). The catalysed reaction is L-glutamine + H2O = L-glutamate + NH4(+). The protein operates within purine metabolism; IMP biosynthesis via de novo pathway; 5-amino-1-(5-phospho-D-ribosyl)imidazole from N(2)-formyl-N(1)-(5-phospho-D-ribosyl)glycinamide: step 1/2. In terms of biological role, part of the phosphoribosylformylglycinamidine synthase complex involved in the purines biosynthetic pathway. Catalyzes the ATP-dependent conversion of formylglycinamide ribonucleotide (FGAR) and glutamine to yield formylglycinamidine ribonucleotide (FGAM) and glutamate. The FGAM synthase complex is composed of three subunits. PurQ produces an ammonia molecule by converting glutamine to glutamate. PurL transfers the ammonia molecule to FGAR to form FGAM in an ATP-dependent manner. PurS interacts with PurQ and PurL and is thought to assist in the transfer of the ammonia molecule from PurQ to PurL. This is Phosphoribosylformylglycinamidine synthase subunit PurQ from Treponema denticola (strain ATCC 35405 / DSM 14222 / CIP 103919 / JCM 8153 / KCTC 15104).